A 401-amino-acid polypeptide reads, in one-letter code: MDSGAVPTNASNCTDPFTHPSSCSPAPSPSSWVNFSHLEGNLSDPCGPNRTELGGSDRLCPSAGSPSMITAIIIMALYSIVCVVGLFGNFLVMYVIVRYTKMKTATNIYIFNLALADALATSTLPFQSVNYLMGTWPFGTILCKIVISIDYYNMFTSIFTLCTMSVDRYIAVCHPVKALDLRTPRNAKIINICNWILSSAIGLPVMFMATTKYRQGSIDCTLTFSHPTWYWENLLKICVFIFAFIMPILIITVCYGLMILRLKSVRMLSGSKEKDRNLRRITRMVLVVVAVFIVCWTPIHIYVIIKALITIPETTFQTVSWHFCIALGYTNSCLNPVLYAFLDENFKRCFREFCIPTSSTIEQQNSTRIRQNTRDHPSTANTVDRTNHQLENLEAETTPLP.

At 1–69 (MDSGAVPTNA…CPSAGSPSMI (69 aa)) the chain is on the extracellular side. N-linked (GlcNAc...) asparagine glycans are attached at residues asparagine 9, asparagine 12, asparagine 34, asparagine 41, and asparagine 49. Residues 70-94 (TAIIIMALYSIVCVVGLFGNFLVMY) form a helical membrane-spanning segment. Over 95–107 (VIVRYTKMKTATN) the chain is Cytoplasmic. The helical transmembrane segment at 108–132 (IYIFNLALADALATSTLPFQSVNYL) threads the bilayer. Over 133-143 (MGTWPFGTILC) the chain is Extracellular. Cysteine 143 and cysteine 220 are oxidised to a cystine. The helical transmembrane segment at 144 to 166 (KIVISIDYYNMFTSIFTLCTMSV) threads the bilayer. The Cytoplasmic segment spans residues 167–186 (DRYIAVCHPVKALDLRTPRN). The residue at position 169 (tyrosine 169) is a Phosphotyrosine. A helical transmembrane segment spans residues 187–208 (AKIINICNWILSSAIGLPVMFM). Topologically, residues 209-231 (ATTKYRQGSIDCTLTFSHPTWYW) are extracellular. Residues 232-256 (ENLLKICVFIFAFIMPILIITVCYG) form a helical membrane-spanning segment. Over 257 to 280 (LMILRLKSVRMLSGSKEKDRNLRR) the chain is Cytoplasmic. The chain crosses the membrane as a helical span at residues 281–307 (ITRMVLVVVAVFIVCWTPIHIYVIIKA). Residues 308–315 (LITIPETT) are Extracellular-facing. Residues 316 to 339 (FQTVSWHFCIALGYTNSCLNPVLY) traverse the membrane as a helical segment. Residues 335–339 (NPVLY) carry the NPxxY; plays a role in stabilizing the activated conformation of the receptor motif. Residues 340–401 (AFLDENFKRC…NLEAETTPLP (62 aa)) lie on the Cytoplasmic side of the membrane. Cysteine 354 carries S-palmitoyl cysteine lipidation. The disordered stretch occupies residues 365-389 (NSTRIRQNTRDHPSTANTVDRTNHQ). Serine 366 is modified (phosphoserine). Threonine 373 bears the Phosphothreonine mark. Serine 378 carries the post-translational modification Phosphoserine. Threonine 397 carries the phosphothreonine modification.

The protein belongs to the G-protein coupled receptor 1 family. Forms homooligomers and heterooligomers with other GPCRs, such as OPRD1, OPRK1, OPRL1, NPFFR2, ADRA2A, SSTR2, CNR1 and CCR5 (probably in dimeric forms). Interacts with heterotrimeric G proteins; interaction with a heterotrimeric complex containing GNAI1, GNB1 and GNG2 stabilizes the active conformation of the receptor and increases its affinity for endomorphin-2, the synthetic opioid peptide DAMGO and for morphinan agonists. Interacts with PPL; the interaction disrupts agonist-mediated G-protein activation. Interacts (via C-terminus) with DNAJB4 (via C-terminus). Interacts with calmodulin; the interaction inhibits the constitutive activity of OPRM1; it abolishes basal and attenuates agonist-stimulated G-protein coupling. Interacts with FLNA, PLD2, RANBP9 and WLS and GPM6A. Interacts with RTP4. Interacts with SYP and GNAS. Interacts with RGS9, RGS17, RGS20, RGS4, PPP1R9B and HINT1. Phosphorylated. Differentially phosphorylated in basal and agonist-induced conditions. Agonist-mediated phosphorylation modulates receptor internalization. Phosphorylated by GRK2 in a agonist-dependent manner. Phosphorylation at Tyr-169 requires receptor activation, is dependent on non-receptor protein tyrosine kinase Src and results in a decrease in agonist efficacy by reducing G-protein coupling efficiency. Phosphorylated on tyrosine residues; the phosphorylation is involved in agonist-induced G-protein-independent receptor down-regulation. Phosphorylation at Ser-378 is involved in G-protein-dependent but not beta-arrestin-dependent activation of the ERK pathway. In terms of processing, ubiquitinated. A basal ubiquitination seems not to be related to degradation. Ubiquitination is increased upon formation of OPRM1:OPRD1 oligomers leading to proteasomal degradation; the ubiquitination is diminished by RTP4.

The protein resides in the cell membrane. Its subcellular location is the cell projection. It localises to the axon. The protein localises to the perikaryon. It is found in the dendrite. The protein resides in the endosome. Functionally, receptor for endogenous opioids such as beta-endorphin and endomorphin. Receptor for natural and synthetic opioids including morphine, heroin, DAMGO, fentanyl, etorphine, buprenorphin and methadone. Also activated by enkephalin peptides, such as Met-enkephalin or Met-enkephalin-Arg-Phe, with higher affinity for Met-enkephalin-Arg-Phe. Agonist binding to the receptor induces coupling to an inactive GDP-bound heterotrimeric G-protein complex and subsequent exchange of GDP for GTP in the G-protein alpha subunit leading to dissociation of the G-protein complex with the free GTP-bound G-protein alpha and the G-protein beta-gamma dimer activating downstream cellular effectors. The agonist- and cell type-specific activity is predominantly coupled to pertussis toxin-sensitive G(i) and G(o) G alpha proteins, GNAI1, GNAI2, GNAI3 and GNAO1, and to a lesser extent to pertussis toxin-insensitive G alpha proteins GNAZ and GNA15. They mediate an array of downstream cellular responses, including inhibition of adenylate cyclase activity and both N-type and L-type calcium channels, activation of inward rectifying potassium channels, mitogen-activated protein kinase (MAPK), phospholipase C (PLC), phosphoinositide/protein kinase (PKC), phosphoinositide 3-kinase (PI3K) and regulation of NF-kappa-B. Also couples to adenylate cyclase stimulatory G alpha proteins. The selective temporal coupling to G-proteins and subsequent signaling can be regulated by RGSZ proteins, such as RGS9, RGS17 and RGS4. Phosphorylation by members of the GPRK subfamily of Ser/Thr protein kinases and association with beta-arrestins is involved in short-term receptor desensitization. Beta-arrestins associate with the GPRK-phosphorylated receptor and uncouple it from the G-protein thus terminating signal transduction. The phosphorylated receptor is internalized through endocytosis via clathrin-coated pits which involves beta-arrestins. The activation of the ERK pathway occurs either in a G-protein-dependent or a beta-arrestin-dependent manner and is regulated by agonist-specific receptor phosphorylation. Acts as a class A G-protein coupled receptor (GPCR) which dissociates from beta-arrestin at or near the plasma membrane and undergoes rapid recycling. Receptor down-regulation pathways are varying with the agonist and occur dependent or independent of G-protein coupling. Endogenous ligands induce rapid desensitization, endocytosis and recycling. Heterooligomerization with other GPCRs can modulate agonist binding, signaling and trafficking properties. Involved in neurogenesis. The chain is Mu-type opioid receptor (OPRM1) from Bos taurus (Bovine).